Reading from the N-terminus, the 120-residue chain is Large ribosomal subunit protein bL12 (120 aa).

It belongs to the bacterial ribosomal protein bL12 family. In terms of assembly, homodimer. Part of the ribosomal stalk of the 50S ribosomal subunit. Forms a multimeric L10(L12)X complex, where L10 forms an elongated spine to which 2 to 4 L12 dimers bind in a sequential fashion. Binds GTP-bound translation factors.

Functionally, forms part of the ribosomal stalk which helps the ribosome interact with GTP-bound translation factors. Is thus essential for accurate translation. This is Large ribosomal subunit protein bL12 from Listeria welshimeri serovar 6b (strain ATCC 35897 / DSM 20650 / CCUG 15529 / CIP 8149 / NCTC 11857 / SLCC 5334 / V8).